Here is a 245-residue protein sequence, read N- to C-terminus: tRNA pseudouridine synthase A (245 aa).

The active-site Nucleophile is Asp52. Tyr111 contributes to the substrate binding site.

This sequence belongs to the tRNA pseudouridine synthase TruA family. Homodimer.

It carries out the reaction uridine(38/39/40) in tRNA = pseudouridine(38/39/40) in tRNA. In terms of biological role, formation of pseudouridine at positions 38, 39 and 40 in the anticodon stem and loop of transfer RNAs. This Rickettsia akari (strain Hartford) protein is tRNA pseudouridine synthase A.